Consider the following 158-residue polypeptide: Small ribosomal subunit protein uS7 (158 aa).

This sequence belongs to the universal ribosomal protein uS7 family. Part of the 30S ribosomal subunit. Contacts proteins S9 and S11.

In terms of biological role, one of the primary rRNA binding proteins, it binds directly to 16S rRNA where it nucleates assembly of the head domain of the 30S subunit. Is located at the subunit interface close to the decoding center, probably blocks exit of the E-site tRNA. The chain is Small ribosomal subunit protein uS7 from Acidiphilium cryptum (strain JF-5).